Consider the following 140-residue polypeptide: DegV domain-containing 15.5 kDa protein (140 aa).

One can recognise a DegV domain in the interval 4–140; the sequence is QIIVTDSTSD…ELVLLQSKKI (137 aa). Hexadecanoate is bound by residues Thr61 and Ser93.

In terms of biological role, may bind long-chain fatty acids, such as palmitate, and may play a role in lipid transport or fatty acid metabolism. This Staphylococcus aureus protein is DegV domain-containing 15.5 kDa protein.